Consider the following 1521-residue polypeptide: Suppressor of Ty 6 homolog (1521 aa).

Residues 1 to 204 (MDFIDNQAEE…EGAEDDARDV (204 aa)) form a disordered region. A compositionally biased stretch (basic residues) spans 26 to 41 (KKMKMAKDKLKKKKKV). The short motif at 26 to 42 (KKMKMAKDKLKKKKKVV) is the Nuclear localization signal element. Acidic residues-rich tracts occupy residues 45–56 (SDEDEDDEDDEE) and 67–76 (ADEDDEEEDA). Basic and acidic residues predominate over residues 77 to 89 (RSEKSDRSRRSEI). The span at 90–103 (NDELDDEDLDLIDE) shows a compositional bias: acidic residues. Over residues 127–149 (PIRRSNQDDDDLQSERGSDDGDK) the composition is skewed to basic and acidic residues. Residues 167 to 177 (RSEDDFIEDDG) show a composition bias toward acidic residues. The 70-residue stretch at 1182-1251 (LNAGRPGGCV…EKFSILLSCK (70 aa)) folds into the S1 motif domain. One can recognise an SH2 domain in the interval 1299–1388 (HPNFHNVSYE…IARFVLPMIQ (90 aa)). The segment at 1490-1521 (GIRSSLSYRPTGRTGPPPSAPYQQPPQQQYYR) is disordered. The segment covering 1504 to 1513 (GPPPSAPYQQ) has biased composition (pro residues).

It belongs to the SPT6 family. As to quaternary structure, interacts with glp-1 and lin-12.

Its subcellular location is the nucleus. Functionally, histone H3-H4 chaperone that plays a role in maintenance of chromatin structure during RNA polymerase II transcription elongation. May be required for several aspects of morphogenesis of C.briggsae, including regulation of division in the germline and gut and specification of ventral-uterine precursor cell fate. In Caenorhabditis briggsae, this protein is Suppressor of Ty 6 homolog (emb-5).